Here is a 74-residue protein sequence, read N- to C-terminus: Complement C5a anaphylatoxin (74 aa).

The tract at residues 15–44 is involved in C5AR1 binding; it reads YAMLKKCCYDGAYRNDDETCEERAARIKIG. Cystine bridges form between Cys21–Cys47, Cys22–Cys54, and Cys34–Cys55. Residues 21–55 enclose the Anaphylatoxin-like domain; it reads CCYDGAYRNDDETCEERAARIKIGPKCVKAFKDCC. The interval 72–74 is required for 90% of C5a activity; although Arg-74 is not essential; sequence LGR.

The protein localises to the secreted. In terms of biological role, mediator of local inflammatory process released following cleavage by C5 convertase. Acts by binding to its receptor (C5AR1 or C5AR2), activating G protein-coupled receptor signaling and inducing a variety of responses including intracellular calcium release, contraction of smooth muscle, increased vascular permeability, and histamine release from mast cells and basophilic leukocytes. C5a is also a potent chemokine which stimulates the locomotion of polymorphonuclear leukocytes and directs their migration toward sites of inflammation. The polypeptide is Complement C5a anaphylatoxin (C5) (Sus scrofa (Pig)).